We begin with the raw amino-acid sequence, 242 residues long: Peptidyl-prolyl cis-trans isomerase FKBP20-2, chloroplastic (242 aa).

A chloroplast-targeting transit peptide spans 1-31 (MVTILSTPLSPRLTFLCETKLSLSRSNRSVC). Residues 32-67 (CSLSEEPKDQCLSRRSLVYVLVASPCLLLPALSSSA) constitute a thylakoid transit peptide. The PPIase FKBP-type domain occupies 138–225 (GQQVTFHYIG…VFDVELLSIQ (88 aa)). Cys227 and Cys241 form a disulfide bridge.

It belongs to the FKBP-type PPIase family. In terms of assembly, interacts in vitro with LTO1.

Its subcellular location is the plastid. It localises to the chloroplast thylakoid lumen. The catalysed reaction is [protein]-peptidylproline (omega=180) = [protein]-peptidylproline (omega=0). Functionally, PPIases accelerate the folding of proteins. It catalyzes the cis-trans isomerization of proline imidic peptide bonds in oligopeptides. Involved in the accumulation of the PSII complex. The polypeptide is Peptidyl-prolyl cis-trans isomerase FKBP20-2, chloroplastic (Arabidopsis thaliana (Mouse-ear cress)).